A 178-amino-acid chain; its full sequence is Cell division protein ZapC (178 aa).

The protein belongs to the ZapC family. As to quaternary structure, interacts directly with FtsZ.

The protein resides in the cytoplasm. In terms of biological role, contributes to the efficiency of the cell division process by stabilizing the polymeric form of the cell division protein FtsZ. Acts by promoting interactions between FtsZ protofilaments and suppressing the GTPase activity of FtsZ. The sequence is that of Cell division protein ZapC from Pseudoalteromonas atlantica (strain T6c / ATCC BAA-1087).